A 202-amino-acid polypeptide reads, in one-letter code: uncharacterized protein (202 aa).

This is an uncharacterized protein from Homo sapiens (Human).